Consider the following 83-residue polypeptide: MALKREIQGVVLQKAGDKTATILVERRVMHPRYHKFVKRFKKYLVHDEKNETNAGDTIVAVECRPLSARKSFRLKAIVAKGVE.

Belongs to the universal ribosomal protein uS17 family. As to quaternary structure, part of the 30S ribosomal subunit.

Its function is as follows. One of the primary rRNA binding proteins, it binds specifically to the 5'-end of 16S ribosomal RNA. The protein is Small ribosomal subunit protein uS17 of Campylobacter curvus (strain 525.92).